Reading from the N-terminus, the 346-residue chain is Methylthioribose-1-phosphate isomerase (346 aa).

Substrate contacts are provided by residues 50-52 (RGA), R93, and Q196. The Proton donor role is filled by D237. 247–248 (NK) is a binding site for substrate.

Belongs to the eIF-2B alpha/beta/delta subunits family. MtnA subfamily.

It carries out the reaction 5-(methylsulfanyl)-alpha-D-ribose 1-phosphate = 5-(methylsulfanyl)-D-ribulose 1-phosphate. The protein operates within amino-acid biosynthesis; L-methionine biosynthesis via salvage pathway; L-methionine from S-methyl-5-thio-alpha-D-ribose 1-phosphate: step 1/6. Catalyzes the interconversion of methylthioribose-1-phosphate (MTR-1-P) into methylthioribulose-1-phosphate (MTRu-1-P). The chain is Methylthioribose-1-phosphate isomerase from Alkalilimnicola ehrlichii (strain ATCC BAA-1101 / DSM 17681 / MLHE-1).